We begin with the raw amino-acid sequence, 157 residues long: uncharacterized protein (157 aa).

An N-acetyltransferase domain is found at 9–154; the sequence is LLINYKTLDE…ETNLNAVTNE (146 aa).

This is an uncharacterized protein from Bacillus cereus (strain ATCC 14579 / DSM 31 / CCUG 7414 / JCM 2152 / NBRC 15305 / NCIMB 9373 / NCTC 2599 / NRRL B-3711).